A 199-amino-acid chain; its full sequence is Transcriptional regulatory protein EntR (199 aa).

The region spanning 3 to 124 is the Response regulatory domain; it reads KILVIDRCHF…TLSHTIQEAL (122 aa). Residue Asp8 is modified to 4-aspartylphosphate. Residues 133-198 enclose the HTH luxR-type domain; it reads PKNATPLLTP…SPFLSLPGKG (66 aa). A DNA-binding region (H-T-H motif) is located at residues 157-176; sequence NNAIAAALSIHGKTVYTYKR.

May serve to repress the entericidin locus in C.freundii. This is Transcriptional regulatory protein EntR (ecnR) from Citrobacter freundii.